Reading from the N-terminus, the 315-residue chain is uncharacterized protein (315 aa).

A run of 3 helical transmembrane segments spans residues 18-38, 202-222, and 244-264; these read IWFIIFYLFVIQALGSAIISG, ILAIAMFIVIWPVTMGILAGI, and LIYAVVIAFVCTPVAIIVIVL. Positions 288 to 315 are disordered; it reads VCSTGNRSSGSTDQDISTTKQQSQEAVA.

It is found in the membrane. This is an uncharacterized protein from Saccharomyces cerevisiae (strain ATCC 204508 / S288c) (Baker's yeast).